We begin with the raw amino-acid sequence, 515 residues long: 2-isopropylmalate synthase (515 aa).

A Pyruvate carboxyltransferase domain is found at 4-266 (INIFDTTLRD…ETRLNLQEIK (263 aa)). Residues Asp13, His201, His203, and Asn237 each coordinate Mn(2+). Residues 391 to 515 (QLSSLQVQYG…RAENQKVAMQ (125 aa)) are regulatory domain.

Belongs to the alpha-IPM synthase/homocitrate synthase family. LeuA type 1 subfamily. In terms of assembly, homodimer. Mn(2+) is required as a cofactor.

It localises to the cytoplasm. The enzyme catalyses 3-methyl-2-oxobutanoate + acetyl-CoA + H2O = (2S)-2-isopropylmalate + CoA + H(+). It functions in the pathway amino-acid biosynthesis; L-leucine biosynthesis; L-leucine from 3-methyl-2-oxobutanoate: step 1/4. In terms of biological role, catalyzes the condensation of the acetyl group of acetyl-CoA with 3-methyl-2-oxobutanoate (2-ketoisovalerate) to form 3-carboxy-3-hydroxy-4-methylpentanoate (2-isopropylmalate). In Geobacillus sp. (strain WCH70), this protein is 2-isopropylmalate synthase.